A 157-amino-acid chain; its full sequence is Ribosome maturation factor RimP (157 aa).

It belongs to the RimP family.

The protein localises to the cytoplasm. Required for maturation of 30S ribosomal subunits. This Ligilactobacillus salivarius (strain UCC118) (Lactobacillus salivarius) protein is Ribosome maturation factor RimP.